The following is a 323-amino-acid chain: Chitin-binding lectin 1 (323 aa).

A signal peptide spans 1 to 22 (MKETAISVLALLTLFLLEVVSA). 4 positions are modified to 4-hydroxyproline: Pro50, Pro51, Pro53, and Pro55. Pro50, Pro51, Pro53, and Pro55 each carry an O-linked (Ara...) hydroxyproline glycan. Chitin-binding type-1 domains lie at 58 to 101 (YPQC…QCPG) and 105 to 149 (EGRC…QCKL). 8 disulfides stabilise this stretch: Cys61–Cys77, Cys70–Cys83, Cys76–Cys90, Cys95–Cys99, Cys108–Cys125, Cys117–Cys131, Cys124–Cys138, and Cys143–Cys147. Ser78, Trp80, Trp82, and Tyr89 together coordinate chitin. Positions 150–210 (PSPPPPPPPP…PPPPPPALPY (61 aa)) are extensin-like. Residue Ser151 is glycosylated (O-linked (Gal) serine). Repeat copies occupy residues 151–159 (SPPPPPPPP), 160–164 (SPPPP), 165–167 (SPP), 168–172 (SPPPP), 173–180 (SPPPPPPP), 181–185 (SPPPP), 186–190 (SPPPP), 191–192 (SP), 193–198 (SPPPPP), and 200–206 (SPPPPPP). The 10 X approximate repeats of S-P-P-P-P stretch occupies residues 151–206 (SPPPPPPPPSPPPPSPPSPPPPSPPPPPPPSPPPPSPPPPSPSPPPPPASPPPPPP). 4-hydroxyproline occurs at positions 152, 153, 154, 155, 156, 157, 158, and 159. O-linked (Ara...) hydroxyproline glycans are attached at residues Pro152, Pro153, Pro154, Pro155, Pro156, Pro157, Pro158, and Pro159. Residues 154 to 203 (PPPPPPSPPPPSPPSPPPPSPPPPPPPSPPPPSPPPPSPSPPPPPASPPP) form a disordered region. Ser160 is a glycosylation site (O-linked (Gal) serine). Pro161, Pro162, Pro163, and Pro164 each carry 4-hydroxyproline. O-linked (Ara...) hydroxyproline glycans are attached at residues Pro161, Pro162, Pro163, and Pro164. The O-linked (Gal) serine glycan is linked to Ser165. Residues Pro166 and Pro167 each carry the 4-hydroxyproline modification. Residues Pro166 and Pro167 are each glycosylated (O-linked (Ara...) hydroxyproline). The O-linked (Gal) serine glycan is linked to Ser168. 4-hydroxyproline occurs at positions 169, 170, 171, and 172. O-linked (Ara...) hydroxyproline glycosylation is found at Pro169, Pro170, Pro171, and Pro172. Ser173 carries an O-linked (Gal) serine glycan. Residues Pro174, Pro175, Pro176, Pro177, Pro178, Pro179, and Pro180 each carry the 4-hydroxyproline modification. 7 O-linked (Ara...) hydroxyproline glycosylation sites follow: Pro174, Pro175, Pro176, Pro177, Pro178, Pro179, and Pro180. O-linked (Gal) serine glycosylation occurs at Ser181. Pro182, Pro183, Pro184, and Pro185 each carry 4-hydroxyproline. O-linked (Ara...) hydroxyproline glycosylation is found at Pro182, Pro183, Pro184, and Pro185. A glycan (O-linked (Gal) serine) is linked at Ser186. A 4-hydroxyproline mark is found at Pro187, Pro188, Pro189, and Pro190. 4 O-linked (Ara...) hydroxyproline glycosylation sites follow: Pro187, Pro188, Pro189, and Pro190. O-linked (Gal) serine glycosylation occurs at Ser191. A 4-hydroxyproline modification is found at Pro192. Pro192 is a glycosylation site (O-linked (Ara...) hydroxyproline). Ser193 carries O-linked (Gal) serine glycosylation. 4-hydroxyproline is present on residues Pro194, Pro195, Pro196, Pro197, and Pro198. Pro194, Pro195, Pro196, Pro197, and Pro198 each carry an O-linked (Ara...) hydroxyproline glycan. A glycan (O-linked (Gal) serine) is linked at Ser200. Pro201, Pro202, Pro203, Pro204, Pro205, Pro206, and Pro209 each carry 4-hydroxyproline. O-linked (Ara...) hydroxyproline glycosylation is found at Pro201, Pro202, Pro203, Pro204, Pro205, Pro206, and Pro209. Chitin-binding type-1 domains lie at 210 to 253 (YPQC…QCPG) and 257 to 301 (EGRC…QCNT). 8 disulfide bridges follow: Cys213/Cys229, Cys222/Cys235, Cys228/Cys242, Cys247/Cys251, Cys260/Cys277, Cys269/Cys283, Cys276/Cys290, and Cys295/Cys299. Chitin-binding residues include Ser230, Trp232, Trp234, and Tyr241.

The protein in the central section; belongs to the extensin family. In terms of assembly, homodimer. Heavily glycosylated with beta-arabinose on hydroxyprolines and with alpha-galactose on serines of the extensin-like domain. As no other sugars could be detected in the native lectin, it is unlikely that the three putative N-glycosylation sites are actually glycosylated. In terms of processing, the N-terminus is blocked. The N-terminal sequences proposed in PubMed:9022287 and PubMed:11056399 originate probably from truncated proteins.

This protein might function as a defense against chitin containing pathogens. Binds to several branched or linear N-acetyllactosamine-containing glycosphingolipids and also to lactosylceramide with sphingosine and non-hydroxy fatty acids. The sequence is that of Chitin-binding lectin 1 from Solanum tuberosum (Potato).